The primary structure comprises 360 residues: Peptide chain release factor 1 (360 aa).

Gln-233 carries the N5-methylglutamine modification. The disordered stretch occupies residues 283-305; that stretch reads KLDAERAADRRSQVGSGDRSERI.

The protein belongs to the prokaryotic/mitochondrial release factor family. Post-translationally, methylated by PrmC. Methylation increases the termination efficiency of RF1.

The protein localises to the cytoplasm. Its function is as follows. Peptide chain release factor 1 directs the termination of translation in response to the peptide chain termination codons UAG and UAA. In Methylocella silvestris (strain DSM 15510 / CIP 108128 / LMG 27833 / NCIMB 13906 / BL2), this protein is Peptide chain release factor 1.